We begin with the raw amino-acid sequence, 316 residues long: Small ribosomal subunit protein mS26 (316 aa).

The disordered stretch occupies residues 41–71 (TTRSARDSVSIPPDSPNYIKVPEPPQSSEVR).

The protein belongs to the mitochondrion-specific ribosomal protein mS26 family. As to quaternary structure, component of the mitochondrial small ribosomal subunit (mt-SSU). Mature N.crassa 74S mitochondrial ribosomes consist of a small (37S) and a large (54S) subunit. The 37S small subunit contains a 16S ribosomal RNA (16S mt-rRNA) and 32 different proteins. The 54S large subunit contains a 23S rRNA (23S mt-rRNA) and 42 different proteins.

It is found in the mitochondrion. In terms of biological role, component of the mitochondrial ribosome (mitoribosome), a dedicated translation machinery responsible for the synthesis of mitochondrial genome-encoded proteins, including at least some of the essential transmembrane subunits of the mitochondrial respiratory chain. The mitoribosomes are attached to the mitochondrial inner membrane and translation products are cotranslationally integrated into the membrane. The protein is Small ribosomal subunit protein mS26 (pet123) of Neurospora crassa (strain ATCC 24698 / 74-OR23-1A / CBS 708.71 / DSM 1257 / FGSC 987).